Reading from the N-terminus, the 123-residue chain is Large ribosomal subunit protein bL12 (123 aa).

Belongs to the bacterial ribosomal protein bL12 family. As to quaternary structure, homodimer. Part of the ribosomal stalk of the 50S ribosomal subunit. Forms a multimeric L10(L12)X complex, where L10 forms an elongated spine to which 2 to 4 L12 dimers bind in a sequential fashion. Binds GTP-bound translation factors.

Its function is as follows. Forms part of the ribosomal stalk which helps the ribosome interact with GTP-bound translation factors. Is thus essential for accurate translation. The polypeptide is Large ribosomal subunit protein bL12 (Bartonella henselae (strain ATCC 49882 / DSM 28221 / CCUG 30454 / Houston 1) (Rochalimaea henselae)).